The sequence spans 533 residues: CWF19-like protein 1 homolog (533 aa).

Residues 290-314 (EMGGAEDGAGNGRKRHNDGGNDGPR) are disordered.

This sequence belongs to the CWF19 family.

The protein is CWF19-like protein 1 homolog of Caenorhabditis elegans.